The primary structure comprises 374 residues: Queuine tRNA-ribosyltransferase (374 aa).

Asp-89 serves as the catalytic Proton acceptor. Substrate contacts are provided by residues Asp-89–Phe-93, Asp-143, Gln-187, and Gly-214. The RNA binding stretch occupies residues Gly-245–Asp-251. Residue Asp-264 is the Nucleophile of the active site. The tract at residues Thr-269–Arg-273 is RNA binding; important for wobble base 34 recognition. Zn(2+) is bound by residues Cys-302, Cys-304, Cys-307, and His-333.

It belongs to the queuine tRNA-ribosyltransferase family. In terms of assembly, homodimer. Within each dimer, one monomer is responsible for RNA recognition and catalysis, while the other monomer binds to the replacement base PreQ1. It depends on Zn(2+) as a cofactor.

The enzyme catalyses 7-aminomethyl-7-carbaguanine + guanosine(34) in tRNA = 7-aminomethyl-7-carbaguanosine(34) in tRNA + guanine. Its pathway is tRNA modification; tRNA-queuosine biosynthesis. In terms of biological role, catalyzes the base-exchange of a guanine (G) residue with the queuine precursor 7-aminomethyl-7-deazaguanine (PreQ1) at position 34 (anticodon wobble position) in tRNAs with GU(N) anticodons (tRNA-Asp, -Asn, -His and -Tyr). Catalysis occurs through a double-displacement mechanism. The nucleophile active site attacks the C1' of nucleotide 34 to detach the guanine base from the RNA, forming a covalent enzyme-RNA intermediate. The proton acceptor active site deprotonates the incoming PreQ1, allowing a nucleophilic attack on the C1' of the ribose to form the product. After dissociation, two additional enzymatic reactions on the tRNA convert PreQ1 to queuine (Q), resulting in the hypermodified nucleoside queuosine (7-(((4,5-cis-dihydroxy-2-cyclopenten-1-yl)amino)methyl)-7-deazaguanosine). The sequence is that of Queuine tRNA-ribosyltransferase from Shewanella frigidimarina (strain NCIMB 400).